The sequence spans 393 residues: 26S proteasome regulatory subunit 10B (393 aa).

178 to 185 (GPPGTGKT) is an ATP binding site.

The protein belongs to the AAA ATPase family.

The protein localises to the cytoplasm. It localises to the nucleus. The 26S proteasome is involved in the ATP-dependent degradation of ubiquitinated proteins. The regulatory (or ATPase) complex confers ATP dependency and substrate specificity to the 26S complex. The sequence is that of 26S proteasome regulatory subunit 10B (psmC6) from Dictyostelium discoideum (Social amoeba).